A 100-amino-acid chain; its full sequence is Urease subunit gamma (100 aa).

This sequence belongs to the urease gamma subunit family. In terms of assembly, heterotrimer of UreA (gamma), UreB (beta) and UreC (alpha) subunits. Three heterotrimers associate to form the active enzyme.

It is found in the cytoplasm. It carries out the reaction urea + 2 H2O + H(+) = hydrogencarbonate + 2 NH4(+). It functions in the pathway nitrogen metabolism; urea degradation; CO(2) and NH(3) from urea (urease route): step 1/1. In Vibrio parahaemolyticus, this protein is Urease subunit gamma.